We begin with the raw amino-acid sequence, 626 residues long: Threonine--tRNA ligase (626 aa).

Positions 1 to 144 (MRMLLIHADY…LSRTIVPEEG (144 aa)) are editing domain. The interval 207–506 (PHVRLMLEHE…QAQGKKPMFP (300 aa)) is catalytic. Zn(2+) contacts are provided by C299, H351, and H475.

The protein belongs to the class-II aminoacyl-tRNA synthetase family. In terms of assembly, homodimer. Zn(2+) serves as cofactor.

Its subcellular location is the cytoplasm. It carries out the reaction tRNA(Thr) + L-threonine + ATP = L-threonyl-tRNA(Thr) + AMP + diphosphate + H(+). In terms of biological role, catalyzes the attachment of threonine to tRNA(Thr) in a two-step reaction: L-threonine is first activated by ATP to form Thr-AMP and then transferred to the acceptor end of tRNA(Thr). Also edits incorrectly charged L-seryl-tRNA(Thr). This Thermococcus gammatolerans (strain DSM 15229 / JCM 11827 / EJ3) protein is Threonine--tRNA ligase.